Reading from the N-terminus, the 312-residue chain is Glyoxylate/hydroxypyruvate reductase A (312 aa).

Arg-227 is an active-site residue. The Proton donor role is filled by His-275.

It belongs to the D-isomer specific 2-hydroxyacid dehydrogenase family. GhrA subfamily.

It is found in the cytoplasm. It carries out the reaction glycolate + NADP(+) = glyoxylate + NADPH + H(+). The catalysed reaction is (R)-glycerate + NAD(+) = 3-hydroxypyruvate + NADH + H(+). The enzyme catalyses (R)-glycerate + NADP(+) = 3-hydroxypyruvate + NADPH + H(+). In terms of biological role, catalyzes the NADPH-dependent reduction of glyoxylate and hydroxypyruvate into glycolate and glycerate, respectively. The chain is Glyoxylate/hydroxypyruvate reductase A from Enterobacter sp. (strain 638).